Consider the following 462-residue polypeptide: MQQRIKDILHQGQVGDRITVKGWVRTKRELKECTFVNLNDGSTLAGLQVVIPNTVAAATPTMKDLTTGAAAEFTGELVRSPGKNQAIELHAEEIHLWGTADPETYPLQKKRHSFEFLRTIAHLRPRTNTLGAVMRVRNACATAIHQFFQERGFLWVHTPIITASDCEGAGELFTVTTLDLTQPPKTPEGKIDFSQDFFGRRAYLTVSGQLEAEIMATAFTNVYTFGPTFRAENSNTSRHLAEFWMVEPEMAFCDLRGDMELAEAFLQFVFRYVLDHCPEDMAFFQERIDHSVMATAEQMATQPFAHLSYSEAIQVLEKSGRAFEFPVAWGLDLQSEHERYLAEEYCQRPVIVYDYPAAIKAFYMRLNDDGKTVAAMDILAPKIGEIIGGSQREERFDVLQERIVTQGLDPAPYWWYLDLRRYGSVPHAGFGLGFERLVQFMTGMDNIRDVIPFPRTPGNAEF.

The protein belongs to the class-II aminoacyl-tRNA synthetase family. Homodimer.

It is found in the cytoplasm. The catalysed reaction is tRNA(Asn) + L-asparagine + ATP = L-asparaginyl-tRNA(Asn) + AMP + diphosphate + H(+). This Thermosynechococcus vestitus (strain NIES-2133 / IAM M-273 / BP-1) protein is Asparagine--tRNA ligase.